Consider the following 697-residue polypeptide: Sialic acid-binding Ig-like lectin 10 (697 aa).

The N-terminal stretch at Met1–Ala16 is a signal peptide. The Extracellular portion of the chain corresponds to Met17 to Asn550. The region spanning Asp18–Glu121 is the Ig-like V-type domain. Cystine bridges form between Cys36/Cys173, Cys41/Cys101, Cys164/Cys215, and Cys276/Cys323. N-linked (GlcNAc...) asparagine glycosylation is present at Asn100. Residue Arg119 coordinates N-acetylneuraminate. Ig-like C2-type domains lie at Pro146–Arg231, Pro251–Ser339, and Pro344–Ser441. Asn355 and Asn364 each carry an N-linked (GlcNAc...) asparagine glycan. Cys380 and Cys425 form a disulfide bridge. Residues Asn486 and Asn504 are each glycosylated (N-linked (GlcNAc...) asparagine). The chain crosses the membrane as a helical span at residues Gly551–Met571. The Cytoplasmic portion of the chain corresponds to Lys572–Gln697. An ITIM motif 1 motif is present at residues Leu595 to Val600. Positions Pro606–Gln697 are disordered. Positions Pro620 to Pro629 are enriched in pro residues. The segment covering Lys650 to Gln659 has biased composition (polar residues). Residues Leu665–Leu670 carry the ITIM motif 2 motif. Phosphotyrosine is present on Tyr667.

Belongs to the immunoglobulin superfamily. SIGLEC (sialic acid binding Ig-like lectin) family. Interacts with PTPN6/SHP-1 upon phosphorylation. Interacts with NCF1. Interacts with CD24; the probable CD24:SIGLEC10 complex is proposed to inhibit HGMB1-mediated tissue damage immune response. Interacts with HMGB1; the interaction is dependent on CD24. Interacts with RIGI, CBL and PTPN11. Phosphorylation of Tyr-667 is involved in binding to PTPN6. As to expression, expressed by peripheral blood leukocytes (eosinophils, monocytes and a natural killer cell subpopulation). Isoform 5 is found to be the most abundant isoform. Found in lymph node, lung, ovary and appendix. Isoform 1 is found at high levels and isoform 2 at lower levels in bone marrow, spleen and spinal cord. Isoform 2 is also found in brain. Isoform 4 is specifically found in natural killer cells.

Its subcellular location is the cell membrane. It is found in the secreted. Functionally, putative adhesion molecule that mediates sialic-acid dependent binding to cells. Preferentially binds to alpha-2,3- or alpha-2,6-linked sialic acid. The sialic acid recognition site may be masked by cis interactions with sialic acids on the same cell surface. In the immune response, seems to act as an inhibitory receptor upon ligand induced tyrosine phosphorylation by recruiting cytoplasmic phosphatase(s) via their SH2 domain(s) that block signal transduction through dephosphorylation of signaling molecules. Involved in negative regulation of B-cell antigen receptor signaling. The inhibition of B cell activation is dependent on PTPN6/SHP-1. In association with CD24 may be involved in the selective suppression of the immune response to danger-associated molecular patterns (DAMPs) such as HMGB1, HSP70 and HSP90. In association with CD24 may regulate the immune repsonse of natural killer (NK) cells. Plays a role in the control of autoimmunity. During initiation of adaptive immune responses by CD8-alpha(+) dendritic cells inhibits cross-presentation by impairing the formation of MHC class I-peptide complexes. The function seems to implicate recruitment of PTPN6/SHP-1, which dephosphorylates NCF1 of the NADPH oxidase complex consequently promoting phagosomal acidification. In Homo sapiens (Human), this protein is Sialic acid-binding Ig-like lectin 10 (SIGLEC10).